We begin with the raw amino-acid sequence, 173 residues long: PRKR-interacting protein 1 homolog (173 aa).

Disordered stretches follow at residues 1 to 59 (MAKE…PRSA) and 117 to 173 (MLEE…LEDQ). Basic and acidic residues predominate over residues 26 to 42 (ATDEQRLKLERLMRNPD). The interval 50-142 (RPKEWSPRSA…LKEKKKMCKK (93 aa)) is required for RNA-binding. The stretch at 99–150 (SEKQRLDEEYKKKLIQNKMLEEERTAKRRLKRQKLKEKKKMCKKGKKEEKKE) forms a coiled coil. Positions 124–143 (AKRRLKRQKLKEKKKMCKKG) are enriched in basic residues. The interval 125–137 (KRRLKRQKLKEKK) is required for nuclear localization. A compositionally biased stretch (basic and acidic residues) spans 144 to 173 (KKEEKKEDKDGHTDPENSAESSDKSDLEDQ).

Belongs to the PRKRIP1 family. As to quaternary structure, component of the pre-catalytic and post-catalytic spliceosome complexes.

It is found in the nucleus. The protein resides in the nucleolus. In terms of biological role, required for pre-mRNA splicing as component of the spliceosome. Binds double-stranded RNA. This Xenopus laevis (African clawed frog) protein is PRKR-interacting protein 1 homolog (prkrip1).